Consider the following 1461-residue polypeptide: Neogenin (1461 aa).

Residues 1 to 33 (MAAERGARRLLSTPSFWLYCLLLLGRRAPGAAA) form the signal peptide. The Extracellular segment spans residues 34–1105 (ARSGSAPQSP…PTSPLDSNML (1072 aa)). 4 consecutive Ig-like C2-type domains span residues 52 to 141 (PFYF…TIIS), 152 to 238 (PRFT…VELK), 243 to 336 (PEVI…AELT), and 341 to 426 (PEFL…AQLI). An N-linked (GlcNAc...) asparagine glycan is attached at Asn-73. 3 cysteine pairs are disulfide-bonded: Cys-74-Cys-129, Cys-173-Cys-221, and Cys-270-Cys-320. N-linked (GlcNAc...) asparagine glycosylation occurs at Asn-210. Asn-326 is a glycosylation site (N-linked (GlcNAc...) asparagine). Cys-362 and Cys-410 are disulfide-bonded. 6 Fibronectin type-III domains span residues 441 to 535 (APRD…TQPE), 541 to 631 (PAPN…TLSD), 636 to 731 (APQN…TFES), 741 to 831 (VPSS…RPHT), 856 to 952 (PPVG…TFEL), and 957 to 1054 (PPKD…TPKA). N-linked (GlcNAc...) asparagine glycosylation is found at Asn-470 and Asn-489. Residues Asn-639 and Asn-715 are each glycosylated (N-linked (GlcNAc...) asparagine). A glycan (N-linked (GlcNAc...) asparagine) is linked at Asn-909. Residues 1041 to 1097 (GPMSEAVQFRTPKADSSDKMPNDQASGSGGKGSRLPDLGSDYKPPMSGSNSPHGSPT) form a disordered region. The segment covering 1052-1061 (PKADSSDKMP) has biased composition (basic and acidic residues). Residues 1087-1097 (SGSNSPHGSPT) are compositionally biased toward polar residues. A helical membrane pass occupies residues 1106–1126 (LVIIVSVGVITIVVVVIIAVF). Residues 1127-1461 (CTRRTTSHQK…MKDLNAITTA (335 aa)) are Cytoplasmic-facing. Disordered regions lie at residues 1138-1160 (KRAA…DVKP), 1174-1206 (PIDK…SMDS), 1235-1276 (PKMM…PARS), and 1289-1381 (TSMS…ALPS). Phosphoserine is present on residues Ser-1178 and Ser-1194. The span at 1191–1206 (PRNSQDITPVDNSMDS) shows a compositional bias: polar residues. Thr-1198 is subject to Phosphothreonine. Polar residues-rich tracts occupy residues 1289–1322 (TSMS…TCCT) and 1330–1349 (ATSS…QSLP). A compositionally biased stretch (pro residues) spans 1366–1375 (AIPPPGPPTY). The residue at position 1401 (Ser-1401) is a Phosphoserine. Thr-1404 carries the phosphothreonine modification. A phosphoserine mark is found at Ser-1432, Ser-1434, and Ser-1435.

The protein belongs to the immunoglobulin superfamily. DCC family. Interacts with MYO10. Interacts with RGMA and RGMB. Interacts with BMP2, BMP4, BMP6, and BMP7. As to expression, widely expressed and also in cancer cell lines.

The protein resides in the cell membrane. Its function is as follows. Multi-functional cell surface receptor regulating cell adhesion in many diverse developmental processes, including neural tube and mammary gland formation, myogenesis and angiogenesis. Receptor for members of the BMP, netrin, and repulsive guidance molecule (RGM) families. Netrin-Neogenin interactions result in a chemoattractive axon guidance response and cell-cell adhesion, the interaction between NEO1/Neogenin and RGMa and RGMb induces a chemorepulsive response. The chain is Neogenin (NEO1) from Homo sapiens (Human).